The sequence spans 463 residues: MTSETRTLYSQLPAIDRLLHDSAFLSLRDRYGHTQVVDLLRRMLDDARDVIRNTQTLPDWYADWAQEAKLRLENAAQSALRPVINLTGTVLHTNLGRALQAQEAIEAVTQAMRAPVTLEYDLDGAGRGHRDRALATLLCRITGAEDACIVNNNAAAVLLMLAATASGKEVVVSRGELVEIGGAFRIPDVMRQAGCTLHEVGTTNRTHAKDYRQAVNENTGLLMKVHTSNYSIEGFTKTVEEAELAEIGRELDIPVVADLGSGSLVDLSQYGLPKEPMPQQLIAAGVSLVSFSGDKLLGGPQAGIIVGKKAMIAQLQSHPLKRALRADKMTLAALEATLRLYLHPEALAEKLPTLRLLTRSEASIREQAQRLQARLAARYGDEFALEVKPCLSQIGSGSLPVDRLPSAAMTFTPHDGRGSRLEALAARWRTLPVPVIGRIYDGRLWLDMRCLEDESRFMEMMLK.

The residue at position 295 (Lys295) is an N6-(pyridoxal phosphate)lysine.

The protein belongs to the SelA family. In terms of assembly, homodecamer; pentamer of dimers. Binds only one seryl-tRNA(Sec) per dimer. The cofactor is pyridoxal 5'-phosphate.

Its subcellular location is the cytoplasm. It catalyses the reaction L-seryl-tRNA(Sec) + selenophosphate + H(+) = L-selenocysteinyl-tRNA(Sec) + phosphate. It participates in aminoacyl-tRNA biosynthesis; selenocysteinyl-tRNA(Sec) biosynthesis; selenocysteinyl-tRNA(Sec) from L-seryl-tRNA(Sec) (bacterial route): step 1/1. Functionally, converts seryl-tRNA(Sec) to selenocysteinyl-tRNA(Sec) required for selenoprotein biosynthesis. This Salmonella schwarzengrund (strain CVM19633) protein is L-seryl-tRNA(Sec) selenium transferase.